A 169-amino-acid chain; its full sequence is Ribosome maturation factor RimM (169 aa).

In terms of domain architecture, PRC barrel spans 94–168 (DDEFYHADLI…RIVADPPEGL (75 aa)).

This sequence belongs to the RimM family. Binds ribosomal protein uS19.

The protein localises to the cytoplasm. In terms of biological role, an accessory protein needed during the final step in the assembly of 30S ribosomal subunit, possibly for assembly of the head region. Essential for efficient processing of 16S rRNA. May be needed both before and after RbfA during the maturation of 16S rRNA. It has affinity for free ribosomal 30S subunits but not for 70S ribosomes. The chain is Ribosome maturation factor RimM from Cereibacter sphaeroides (strain ATCC 17025 / ATH 2.4.3) (Rhodobacter sphaeroides).